A 304-amino-acid chain; its full sequence is MAAQRYILVVAHTGRRDSLAAGVSVCRQLLAAGVVPVLSEGERRDLLAAEPELATVVALGAEVPPAELELVIVLGGDGTILRAAELVRGCPAPLLGVNLGHVGFLAESERDDLETAVARGLAKDYEVEERMTLSARVKVGEEVVYESWALNEATVEKANRERVLEVVIEADGRPMSSFGCDGVVMSTPTGSTAYSFSAGGPVVWPGVAALLLVPLSAHALFSRPLVVDADSSLAVELLEGAGGEGVLWCDGRRAFDLPRGARVVVRRSPIPVRLARLHPGPFTDRLVRKFTLPVTGWRGPDGRD.

Aspartate 77 functions as the Proton acceptor in the catalytic mechanism. Residues aspartate 77–glycine 78, arginine 82, asparagine 151–glutamate 152, arginine 162, aspartate 181, and threonine 192–serine 197 each bind NAD(+).

It belongs to the NAD kinase family. Requires a divalent metal cation as cofactor.

It localises to the cytoplasm. It carries out the reaction NAD(+) + ATP = ADP + NADP(+) + H(+). Its function is as follows. Involved in the regulation of the intracellular balance of NAD and NADP, and is a key enzyme in the biosynthesis of NADP. Catalyzes specifically the phosphorylation on 2'-hydroxyl of the adenosine moiety of NAD to yield NADP. This is NAD kinase from Leifsonia xyli subsp. xyli (strain CTCB07).